A 183-amino-acid polypeptide reads, in one-letter code: Protein jagunal homolog 1 (183 aa).

Topologically, residues 1 to 39 (MASRAGPRAAGTDGSDFQHRERVAMHYQMSVTLKYEIKK) are cytoplasmic. Position 3 is a phosphoserine (Ser-3). Residues 40-60 (LIYVHLVIWLLLVAKMSVGHL) form a helical membrane-spanning segment. The Lumenal segment spans residues 61–71 (RLLSHDQVAMP). The helical transmembrane segment at 72-92 (YQWEYPYLLSILPSLLGLLSF) threads the bilayer. The Cytoplasmic portion of the chain corresponds to 93–96 (PRNN). The chain crosses the membrane as a helical span at residues 97 to 117 (ISYLVLSMISMGLFSIAPLIY). The Lumenal portion of the chain corresponds to 118–137 (GSMEMFPAAQQLYRHGKAYR). The chain crosses the membrane as a helical span at residues 138–158 (FLFGFSAVSIMYLVLVLAVQV). Topologically, residues 159-183 (HAWQLYYSKKLLDSWFTSTQEKKHK) are cytoplasmic.

This sequence belongs to the jagunal family. Interacts with COPA, COPB2 and COPG2. As to expression, ubiquitously expressed.

It localises to the endoplasmic reticulum membrane. Functionally, endoplasmic reticulum transmembrane protein involved in vesicle-mediated transport, which is required for neutrophil function. Required for vesicle-mediated transport; it is however unclear whether it is involved in early secretory pathway or intracellular protein transport. Acts as a regulator of neutrophil function, probably via its role in vesicle-mediated transport: required for defense against fungal pathogens and for granulocyte colony-stimulating factor (GM-CSF) signaling pathway; possibly by regulating glycosylation and/or targeting of proteins contributing to the viability and migration of neutrophils. The chain is Protein jagunal homolog 1 from Homo sapiens (Human).